The following is a 1382-amino-acid chain: Eukaryotic translation initiation factor 3 subunit A (1382 aa).

Lysine 68 is subject to N6-acetyllysine. Positions 82–120 form a coiled coil; the sequence is NIKSLEDVVRAYLKMAEEKTEAAKEESQQMVLDIEDLDN. Positions 315–498 constitute a PCI domain; sequence MQRMSTRVLL…RTLSFGSDLN (184 aa). 2 positions are modified to phosphoserine: serine 492 and serine 584. An interaction with EIF3B region spans residues 664-835; that stretch reads LDPDFIMAKQ…REERERAERA (172 aa). Disordered regions lie at residues 810-844 and 866-1382; these read KEEE…LREY and EERE…TVRR. Composition is skewed to basic and acidic residues over residues 866–1165, 1177–1328, and 1336–1371; these read EERE…DDSR, GWRE…DPPR, and SRDR…TKNE. A phosphoserine mark is found at serine 881, serine 882, and serine 895. Copy 1 of the repeat occupies 925–934; it reads DEDRSHRRDE. Residues 925 to 1172 are 25 X 10 AA approximate tandem repeats of [DE]-[DE]-[DE]-R-[SEVGFPILV]-[HPSN]-[RSW]-[RL]-[DRGTIHN]-[EPMANLGDT]; it reads DEDRSHRRDE…DSRPGPWRPL (248 aa). The stretch at 935-942 is one 2; truncated repeat; the sequence is ERPRRLGD. 20 tandem repeats follow at residues 943-952, 953-962, 963-972, 973-982, 983-992, 993-1002, 1003-1012, 1013-1022, 1023-1032, 1033-1042, 1043-1052, 1054-1063, 1064-1073, 1074-1083, 1084-1093, 1094-1103, 1104-1113, 1114-1123, 1124-1133, and 1134-1143. The residue at position 949 (serine 949) is a Phosphoserine. Serine 1028 is modified (phosphoserine). The 23; truncated repeat unit spans residues 1144-1152; that stretch reads DDDRLSRRA. Repeat unit 24 spans residues 1153–1162; the sequence is DDDRFPRRGD. Residues 1163-1172 form a 25; approximate repeat; it reads DSRPGPWRPL. Phosphoserine occurs at positions 1188, 1198, 1262, 1336, and 1364.

Interacts with EIF4G1. Component of the eukaryotic translation initiation factor 3 (eIF-3) complex, which is composed of 13 subunits: EIF3A, EIF3B, EIF3C, EIF3D, EIF3E, EIF3F, EIF3G, EIF3H, EIF3I, EIF3J, EIF3K, EIF3L and EIF3M. The eIF-3 complex appears to include 3 stable modules: module A is composed of EIF3A, EIF3B, EIF3G and EIF3I; module B is composed of EIF3F, EIF3H, and EIF3M; and module C is composed of EIF3C, EIF3D, EIF3E, EIF3L and EIF3K. EIF3C of module C binds EIF3B of module A and EIF3H of module B, thereby linking the three modules. EIF3J is a labile subunit that binds to the eIF-3 complex via EIF3B. The eIF-3 complex interacts with RPS6KB1 under conditions of nutrient depletion. Mitogenic stimulation leads to binding and activation of a complex composed of MTOR and RPTOR, leading to phosphorylation and release of RPS6KB1 and binding of EIF4B to eIF-3. Also interacts with KRT7 and PIWIL2. Post-translationally, phosphorylated. Phosphorylation is enhanced upon serum stimulation.

The protein resides in the cytoplasm. In terms of biological role, RNA-binding component of the eukaryotic translation initiation factor 3 (eIF-3) complex, which is required for several steps in the initiation of protein synthesis. The eIF-3 complex associates with the 40S ribosome and facilitates the recruitment of eIF-1, eIF-1A, eIF-2:GTP:methionyl-tRNAi and eIF-5 to form the 43S pre-initiation complex (43S PIC). The eIF-3 complex stimulates mRNA recruitment to the 43S PIC and scanning of the mRNA for AUG recognition. The eIF-3 complex is also required for disassembly and recycling of post-termination ribosomal complexes and subsequently prevents premature joining of the 40S and 60S ribosomal subunits prior to initiation. The eIF-3 complex specifically targets and initiates translation of a subset of mRNAs involved in cell proliferation, including cell cycling, differentiation and apoptosis, and uses different modes of RNA stem-loop binding to exert either translational activation or repression. (Microbial infection) Essential for the initiation of translation on type-1 viral ribosomal entry sites (IRESs), like for HCV, PV, EV71 or BEV translation. Functionally, (Microbial infection) In case of FCV infection, plays a role in the ribosomal termination-reinitiation event leading to the translation of VP2. This chain is Eukaryotic translation initiation factor 3 subunit A, found in Homo sapiens (Human).